A 442-amino-acid polypeptide reads, in one-letter code: MFDNIVAISSGAKVNQAISIIRLSGPDVFEIMKKIFTGKVGKDKSITYGYIKNDQEIIDEVLVMWFKGPNNFVGEDTVEINAHGGIVVSTLILETIVANGARLAEPGEFSKRAFLNGKLDLVKAEAINDLIHSKTVQQAKINIKKFDRKTSMFINDLINKLVFIIGTCEVNIDYPEYDDIEELTLEVLLPKLKDLEKEISKAVELSERSRIYFNEIPIAIVGRPNVGKSSLLNALLEEDKSIVTNIEGTTRDVVEARFVLNGINFLLKDTAGIRHSENVIEKIGIEKSFKQIQDSEIIIHLVLENQDEDDFERKIKELSEGKKYIRVINKKDLISKDKIKKDQIYISALKGEISELEKAILFEYQNIDLDDFRMIQNTRQLALIKSSLFSIQEAIKGLEQGYTPDVVIVDITKAWEDLVNIVGRADNEKLLDSMFSNFCLGK.

Residues Arg-22, Glu-79, and Lys-118 each coordinate (6S)-5-formyl-5,6,7,8-tetrahydrofolate. Positions 215 to 365 (EIPIAIVGRP…LEKAILFEYQ (151 aa)) constitute a TrmE-type G domain. Asn-225 serves as a coordination point for K(+). GTP-binding positions include 225 to 230 (NVGKSS), 244 to 250 (TNIEGTT), and 269 to 272 (DTAG). Ser-229 is a binding site for Mg(2+). Thr-244, Ile-246, and Thr-249 together coordinate K(+). Thr-250 serves as a coordination point for Mg(2+). Lys-442 is a (6S)-5-formyl-5,6,7,8-tetrahydrofolate binding site.

The protein belongs to the TRAFAC class TrmE-Era-EngA-EngB-Septin-like GTPase superfamily. TrmE GTPase family. As to quaternary structure, homodimer. Heterotetramer of two MnmE and two MnmG subunits. K(+) is required as a cofactor.

It is found in the cytoplasm. Exhibits a very high intrinsic GTPase hydrolysis rate. Involved in the addition of a carboxymethylaminomethyl (cmnm) group at the wobble position (U34) of certain tRNAs, forming tRNA-cmnm(5)s(2)U34. This chain is tRNA modification GTPase MnmE, found in Mycoplasmopsis pulmonis (strain UAB CTIP) (Mycoplasma pulmonis).